The sequence spans 188 residues: dCTP deaminase (188 aa).

Residues 111 to 116 (KSTYAR), 135 to 137 (TLE), Gln-156, Tyr-170, and Gln-180 contribute to the dCTP site. Glu-137 (proton donor/acceptor) is an active-site residue.

Belongs to the dCTP deaminase family. Homotrimer.

The catalysed reaction is dCTP + H2O + H(+) = dUTP + NH4(+). The protein operates within pyrimidine metabolism; dUMP biosynthesis; dUMP from dCTP (dUTP route): step 1/2. Functionally, catalyzes the deamination of dCTP to dUTP. This is dCTP deaminase from Azotobacter vinelandii (strain DJ / ATCC BAA-1303).